The primary structure comprises 314 residues: PDZ domain-containing protein GIPC2 (314 aa).

The span at Met-1–Ala-12 shows a compositional bias: basic residues. A disordered region spans residues Met-1–Pro-36. A compositionally biased stretch (basic and acidic residues) spans Lys-13 to Arg-25. The PDZ domain occupies Glu-117–Glu-197.

The protein belongs to the GIPC family. In terms of assembly, probably interacts with SEMA5A. As to expression, expressed in kidney and lung (at protein level).

It localises to the cytoplasm. This is PDZ domain-containing protein GIPC2 (Gipc2) from Mus musculus (Mouse).